A 606-amino-acid chain; its full sequence is DNA mismatch repair protein MutL (606 aa).

Residues 377–401 (HRPLFAPQPAPQPDREPPLPDSGSR) form a disordered region.

Belongs to the DNA mismatch repair MutL/HexB family.

This protein is involved in the repair of mismatches in DNA. It is required for dam-dependent methyl-directed DNA mismatch repair. May act as a 'molecular matchmaker', a protein that promotes the formation of a stable complex between two or more DNA-binding proteins in an ATP-dependent manner without itself being part of a final effector complex. The chain is DNA mismatch repair protein MutL from Geobacter sulfurreducens (strain ATCC 51573 / DSM 12127 / PCA).